The primary structure comprises 142 residues: Hemoglobin subunit zeta (142 aa).

The residue at position 2 (Ser-2) is an N-acetylserine. Positions 2–142 constitute a Globin domain; it reads SLTRTERTII…VSGVLTEKYR (141 aa). Thr-29 bears the Phosphothreonine mark. Ser-53 is modified (phosphoserine). His-59 contributes to the heme b binding site. Ser-73 and Ser-82 each carry phosphoserine. His-88 serves as a coordination point for heme b.

This sequence belongs to the globin family. In terms of assembly, heterotetramer of two zeta chains and beta-type chains.

In terms of biological role, the zeta chain is an alpha-type chain of mammalian embryonic hemoglobin. This is Hemoglobin subunit zeta (HBZ1) from Capra hircus (Goat).